The primary structure comprises 251 residues: Triosephosphate isomerase (251 aa).

9–11 (NWK) contributes to the substrate binding site. H95 (electrophile) is an active-site residue. The active-site Proton acceptor is the E167. Substrate contacts are provided by residues G173, S213, and 234 to 235 (GG). Residue S213 is modified to Phosphoserine.

The protein belongs to the triosephosphate isomerase family. As to quaternary structure, homodimer.

It is found in the cytoplasm. The catalysed reaction is D-glyceraldehyde 3-phosphate = dihydroxyacetone phosphate. The protein operates within carbohydrate biosynthesis; gluconeogenesis. It participates in carbohydrate degradation; glycolysis; D-glyceraldehyde 3-phosphate from glycerone phosphate: step 1/1. In terms of biological role, involved in the gluconeogenesis. Catalyzes stereospecifically the conversion of dihydroxyacetone phosphate (DHAP) to D-glyceraldehyde-3-phosphate (G3P). This Bacillus cereus (strain AH820) protein is Triosephosphate isomerase.